The following is a 400-amino-acid chain: Protein screw (400 aa).

An N-terminal signal peptide occupies residues 1–16 (MLNVFFLTSLFYAASA). The propeptide occupies 17-277 (TTYVTTNNHI…RFKRDLEKRR (261 aa)). Asn-165, Asn-189, Asn-201, Asn-304, and Asn-342 each carry an N-linked (GlcNAc...) asparagine glycan. 3 disulfides stabilise this stretch: Cys-300–Cys-365, Cys-329–Cys-397, and Cys-333–Cys-399.

It belongs to the TGF-beta family. As to quaternary structure, heterodimers of scw/dpp are the active subunit, dpp/dpp homodimers elicit a basal response and scw/scw homodimers alone are ineffective in specifying a dorsal pattern. In terms of tissue distribution, ubiquitously expressed during early stages of embryogenesis, but the effect on development appears graded and is restricted to the dorsal side of the embryo.

Its subcellular location is the secreted. Its function is as follows. Part of the signal that specifies dorsal cell fates in the embryo. Acts together with dpp. In Drosophila melanogaster (Fruit fly), this protein is Protein screw (scw).